The following is a 204-amino-acid chain: Urease accessory protein UreG (204 aa).

13 to 20 (GPVGSGKT) contributes to the GTP binding site.

It belongs to the SIMIBI class G3E GTPase family. UreG subfamily. In terms of assembly, homodimer. UreD, UreF and UreG form a complex that acts as a GTP-hydrolysis-dependent molecular chaperone, activating the urease apoprotein by helping to assemble the nickel containing metallocenter of UreC. The UreE protein probably delivers the nickel.

The protein resides in the cytoplasm. Functionally, facilitates the functional incorporation of the urease nickel metallocenter. This process requires GTP hydrolysis, probably effectuated by UreG. The protein is Urease accessory protein UreG of Acinetobacter baylyi (strain ATCC 33305 / BD413 / ADP1).